The primary structure comprises 127 residues: uncharacterized protein (127 aa).

The N-terminal stretch at 1–23 (MSKPLKFLLWSSLALLLLQIGSG) is a signal peptide.

This is an uncharacterized protein from Arabidopsis thaliana (Mouse-ear cress).